The chain runs to 430 residues: Tol-Pal system protein TolB (430 aa).

Residues Met1–Ala21 form the signal peptide.

It belongs to the TolB family. In terms of assembly, the Tol-Pal system is composed of five core proteins: the inner membrane proteins TolA, TolQ and TolR, the periplasmic protein TolB and the outer membrane protein Pal. They form a network linking the inner and outer membranes and the peptidoglycan layer.

Its subcellular location is the periplasm. Its function is as follows. Part of the Tol-Pal system, which plays a role in outer membrane invagination during cell division and is important for maintaining outer membrane integrity. TolB occupies a key intermediary position in the Tol-Pal system because it communicates directly with both membrane-embedded components, Pal in the outer membrane and TolA in the inner membrane. In Serratia proteamaculans (strain 568), this protein is Tol-Pal system protein TolB.